The following is a 68-amino-acid chain: Medusin-DA1 (68 aa).

A signal peptide spans 1–22 (MAFLKKSLFLVLFLGLVSLSVC). Residues 23-48 (EEEKRENEEEKNEQEEDDREERNEEK) constitute a propeptide that is removed on maturation. The interval 25–47 (EKRENEEEKNEQEEDDREERNEE) is disordered. Positions 31-41 (EEKNEQEEDDR) are enriched in acidic residues. L67 carries the leucine amide modification.

It belongs to the frog skin active peptide (FSAP) family. Medusin subfamily. Expressed by the skin glands.

It localises to the secreted. Its function is as follows. Antimicrobial peptide with activity against Gram-positive bacteria (S.aureus, MIC=32 mg/L) and fungi (C.albicans, MIC=64 mg/L). Shows weak hemolytic activity. The chain is Medusin-DA1 from Agalychnis dacnicolor (Giant Mexican leaf frog).